The chain runs to 386 residues: 8-amino-7-oxononanoate synthase (386 aa).

Residue Arg-20 coordinates substrate. 107 to 108 (GY) serves as a coordination point for pyridoxal 5'-phosphate. Residue His-132 coordinates substrate. Pyridoxal 5'-phosphate contacts are provided by Ser-178, His-206, and Thr-234. Position 237 is an N6-(pyridoxal phosphate)lysine (Lys-237). Residue Thr-351 coordinates substrate.

This sequence belongs to the class-II pyridoxal-phosphate-dependent aminotransferase family. BioF subfamily. Homodimer. Requires pyridoxal 5'-phosphate as cofactor.

The enzyme catalyses 6-carboxyhexanoyl-[ACP] + L-alanine + H(+) = (8S)-8-amino-7-oxononanoate + holo-[ACP] + CO2. It participates in cofactor biosynthesis; biotin biosynthesis. Its function is as follows. Catalyzes the decarboxylative condensation of pimeloyl-[acyl-carrier protein] and L-alanine to produce 8-amino-7-oxononanoate (AON), [acyl-carrier protein], and carbon dioxide. This chain is 8-amino-7-oxononanoate synthase, found in Aromatoleum aromaticum (strain DSM 19018 / LMG 30748 / EbN1) (Azoarcus sp. (strain EbN1)).